A 450-amino-acid polypeptide reads, in one-letter code: Glucose-6-phosphate isomerase (450 aa).

Thr39 carries the phosphothreonine modification. The active-site Proton donor is Glu291. Catalysis depends on residues His312 and Lys426.

It belongs to the GPI family.

The protein resides in the cytoplasm. It catalyses the reaction alpha-D-glucose 6-phosphate = beta-D-fructose 6-phosphate. It participates in carbohydrate biosynthesis; gluconeogenesis. The protein operates within carbohydrate degradation; glycolysis; D-glyceraldehyde 3-phosphate and glycerone phosphate from D-glucose: step 2/4. Catalyzes the reversible isomerization of glucose-6-phosphate to fructose-6-phosphate. The polypeptide is Glucose-6-phosphate isomerase (Bacillus cereus (strain ATCC 10987 / NRS 248)).